A 124-amino-acid chain; its full sequence is Ragulator complex protein LAMTOR3 (124 aa).

The required for interaction with LAMTOR2 stretch occupies residues 57–70 (TDQGSKLGLSKNKS).

It belongs to the LAMTOR3 family. In terms of assembly, part of the Ragulator complex composed of LAMTOR1, LAMTOR2, LAMTOR3, LAMTOR4 and LAMTOR5. LAMTOR4 and LAMTOR5 form a heterodimer that interacts, through LAMTOR1, with a LAMTOR2, LAMTOR3 heterodimer. The Ragulator complex interacts with both the mTORC1 complex and heterodimers constituted of the Rag GTPases RagA/RRAGA, RagB/RRAGB, RagC/RRAGC and RagD/RRAGD; regulated by amino acid availability. The Ragulator complex interacts with SLC38A9; the probable amino acid sensor. Interacts with LAMTOR1 and LAMTOR2; the interaction is direct. Component of the lysosomal folliculin complex (LFC), composed of FLCN, FNIP1 (or FNIP2), RagA/RRAGA or RagB/RRAGB GDP-bound, RagC/RRAGC or RagD/RRAGD GTP-bound, and Ragulator. Interacts with MAP2K1/MEK1 and MAPK2. Interacts with MORG1.

The protein resides in the late endosome membrane. As part of the Ragulator complex it is involved in amino acid sensing and activation of mTORC1, a signaling complex promoting cell growth in response to growth factors, energy levels, and amino acids. Activated by amino acids through a mechanism involving the lysosomal V-ATPase, the Ragulator plays a dual role for the small GTPases Rag (RagA/RRAGA, RagB/RRAGB, RagC/RRAGC and/or RagD/RRAGD): it (1) acts as a guanine nucleotide exchange factor (GEF), activating the small GTPases Rag and (2) mediates recruitment of Rag GTPases to the lysosome membrane. Activated Ragulator and Rag GTPases function as a scaffold recruiting mTORC1 to lysosomes where it is in turn activated. Adapter protein that enhances the efficiency of the MAP kinase cascade facilitating the activation of MAPK2. This is Ragulator complex protein LAMTOR3 (Lamtor3) from Mus musculus (Mouse).